We begin with the raw amino-acid sequence, 162 residues long: SCF ubiquitin ligase complex protein SKP1b (162 aa).

N-acetylserine is present on Ser2. The tract at residues 100–162 (ILAANYLDIK…NEWCEDKGGN (63 aa)) is interaction with the F-box domain of F-box proteins. Pro143 carries the post-translational modification 4-hydroxyproline. Pro143 is a glycosylation site (O-linked (GlcNAc...) hydroxyproline).

The protein belongs to the SKP1 family. Multiprotein complex (SCF) with cullin and F-box-containing protein. Capable of undergoing aggregation. Post-translationally, O-linked glycan consists of linear Gal-Gal-Fuc-Gal-GlcNAc. In terms of processing, not glycosylated in prespore cells. FpaA and fpaB seem to be identically glycosylated. Glycosylation is required for nuclear enrichment. Post-translationally, hydroxylated by phyA.

The protein resides in the cytoplasm. Its subcellular location is the nucleus. The polypeptide is SCF ubiquitin ligase complex protein SKP1b (fpaB-1) (Dictyostelium discoideum (Social amoeba)).